Reading from the N-terminus, the 172-residue chain is Crossover junction endodeoxyribonuclease RuvC (172 aa).

Catalysis depends on residues aspartate 8, glutamate 67, and aspartate 139. Positions 8, 67, and 139 each coordinate Mg(2+).

It belongs to the RuvC family. As to quaternary structure, homodimer which binds Holliday junction (HJ) DNA. The HJ becomes 2-fold symmetrical on binding to RuvC with unstacked arms; it has a different conformation from HJ DNA in complex with RuvA. In the full resolvosome a probable DNA-RuvA(4)-RuvB(12)-RuvC(2) complex forms which resolves the HJ. It depends on Mg(2+) as a cofactor.

The protein localises to the cytoplasm. It carries out the reaction Endonucleolytic cleavage at a junction such as a reciprocal single-stranded crossover between two homologous DNA duplexes (Holliday junction).. In terms of biological role, the RuvA-RuvB-RuvC complex processes Holliday junction (HJ) DNA during genetic recombination and DNA repair. Endonuclease that resolves HJ intermediates. Cleaves cruciform DNA by making single-stranded nicks across the HJ at symmetrical positions within the homologous arms, yielding a 5'-phosphate and a 3'-hydroxyl group; requires a central core of homology in the junction. The consensus cleavage sequence is 5'-(A/T)TT(C/G)-3'. Cleavage occurs on the 3'-side of the TT dinucleotide at the point of strand exchange. HJ branch migration catalyzed by RuvA-RuvB allows RuvC to scan DNA until it finds its consensus sequence, where it cleaves and resolves the cruciform DNA. The protein is Crossover junction endodeoxyribonuclease RuvC of Hahella chejuensis (strain KCTC 2396).